The sequence spans 356 residues: Pyrimidine monooxygenase RutA (356 aa).

Residues 49-50, N115, E124, 140-141, and S190 each bind FMN; these read IK and RY.

This sequence belongs to the NtaA/SnaA/DszA monooxygenase family. RutA subfamily.

The enzyme catalyses uracil + FMNH2 + NADH + O2 = (Z)-3-ureidoacrylate + FMN + NAD(+) + H2O + H(+). It carries out the reaction thymine + FMNH2 + NADH + O2 = (Z)-2-methylureidoacrylate + FMN + NAD(+) + H2O + H(+). Its function is as follows. Catalyzes the pyrimidine ring opening between N-3 and C-4 by an unusual flavin hydroperoxide-catalyzed mechanism, adding oxygen atoms in the process to yield ureidoacrylate peracid, that immediately reacts with FMN forming ureidoacrylate and FMN-N(5)-oxide. The FMN-N(5)-oxide reacts spontaneously with NADH to produce FMN. Requires the flavin reductase RutF to regenerate FMN in vivo. The chain is Pyrimidine monooxygenase RutA from Haliangium ochraceum (strain DSM 14365 / JCM 11303 / SMP-2).